Here is a 65-residue protein sequence, read N- to C-terminus: Large ribosomal subunit protein bL35 (65 aa).

It belongs to the bacterial ribosomal protein bL35 family.

This Sorangium cellulosum (strain So ce56) (Polyangium cellulosum (strain So ce56)) protein is Large ribosomal subunit protein bL35.